The chain runs to 99 residues: MHEVVRQVMIRGRVQGVGFRYWTMREAIRFGVGGWVRNRRDGSVEALFAGSTEAVAEMITRCRSGPEFARVDDIEDQPVAANALKMIRPGERFSQLPTV.

The 93-residue stretch at 5-97 (VRQVMIRGRV…RPGERFSQLP (93 aa)) folds into the Acylphosphatase-like domain. Residues arginine 20 and asparagine 38 contribute to the active site.

It belongs to the acylphosphatase family.

It carries out the reaction an acyl phosphate + H2O = a carboxylate + phosphate + H(+). The protein is Acylphosphatase (acyP) of Nitrobacter winogradskyi (strain ATCC 25391 / DSM 10237 / CIP 104748 / NCIMB 11846 / Nb-255).